Reading from the N-terminus, the 306-residue chain is Porphobilinogen deaminase (306 aa).

Cysteine 237 is modified (S-(dipyrrolylmethanemethyl)cysteine).

The protein belongs to the HMBS family. In terms of assembly, monomer. Dipyrromethane is required as a cofactor.

The enzyme catalyses 4 porphobilinogen + H2O = hydroxymethylbilane + 4 NH4(+). The protein operates within porphyrin-containing compound metabolism; protoporphyrin-IX biosynthesis; coproporphyrinogen-III from 5-aminolevulinate: step 2/4. Its function is as follows. Tetrapolymerization of the monopyrrole PBG into the hydroxymethylbilane pre-uroporphyrinogen in several discrete steps. The chain is Porphobilinogen deaminase from Syntrophus aciditrophicus (strain SB).